The primary structure comprises 230 residues: Broad specificity amino-acid racemase YgeA (230 aa).

Residues M10, Q52, and 83–85 each bind substrate; that span reads TNT. The active-site Proton donor is T83. The active-site Proton acceptor is the C197. 198-199 serves as a coordination point for substrate; that stretch reads TE.

The protein belongs to the aspartate/glutamate racemases family.

The catalysed reaction is an L-alpha-amino acid = a D-alpha-amino acid. It carries out the reaction L-homoserine = D-homoserine. Amino-acid racemase able to utilize a broad range of substrates. Highest activity is observed with L-homoserine and D-homoserine. Has tenfold lower activity against L-methionine, L-leucine, L-valine and L-histidine. Has low activity with L-norvaline, L-asparagine, D-methionine, L-aminobutyric acid, L-isoleucine, L-serine, L-norleucine, L-alanine, L-glutamine, LL-diaminopimelic acid and L-phenylalanine. Has no activity against ten L-amino acids (Thr, Glu, Asp, Arg, Lys, Tyr, Trp, Orn, Cit and Aad). D-amino acids might be used as components of peptidoglycan and/or be involved in peptidoglycan metabolism and remodeling. The polypeptide is Broad specificity amino-acid racemase YgeA (ygeA) (Escherichia coli (strain K12)).